Here is a 639-residue protein sequence, read N- to C-terminus: Mediator of RNA polymerase II transcription subunit 17 (639 aa).

The stretch at 160 to 187 forms a coiled coil; it reads RLQNFNAAADKLLKSASRLENEVASETR.

The protein belongs to the Mediator complex subunit 17 family. In terms of assembly, component of the Mediator complex.

It is found in the nucleus. Component of the Mediator complex, a coactivator involved in the regulated transcription of nearly all RNA polymerase II-dependent genes. Mediator functions as a bridge to convey information from gene-specific regulatory proteins to the basal RNA polymerase II transcription machinery. Mediator is recruited to promoters by direct interactions with regulatory proteins and serves as a scaffold for the assembly of a functional preinitiation complex with RNA polymerase II and the general transcription factors. The protein is Mediator of RNA polymerase II transcription subunit 17 (srb4) of Neosartorya fischeri (strain ATCC 1020 / DSM 3700 / CBS 544.65 / FGSC A1164 / JCM 1740 / NRRL 181 / WB 181) (Aspergillus fischerianus).